A 366-amino-acid chain; its full sequence is UDP-N-acetylglucosamine--N-acetylmuramyl-(pentapeptide) pyrophosphoryl-undecaprenol N-acetylglucosamine transferase (366 aa).

Residues 15–17 (TGG), Asn127, Arg175, Ser201, Ile255, and Gln300 each bind UDP-N-acetyl-alpha-D-glucosamine.

Belongs to the glycosyltransferase 28 family. MurG subfamily.

It is found in the cell inner membrane. The enzyme catalyses di-trans,octa-cis-undecaprenyl diphospho-N-acetyl-alpha-D-muramoyl-L-alanyl-D-glutamyl-meso-2,6-diaminopimeloyl-D-alanyl-D-alanine + UDP-N-acetyl-alpha-D-glucosamine = di-trans,octa-cis-undecaprenyl diphospho-[N-acetyl-alpha-D-glucosaminyl-(1-&gt;4)]-N-acetyl-alpha-D-muramoyl-L-alanyl-D-glutamyl-meso-2,6-diaminopimeloyl-D-alanyl-D-alanine + UDP + H(+). Its pathway is cell wall biogenesis; peptidoglycan biosynthesis. Cell wall formation. Catalyzes the transfer of a GlcNAc subunit on undecaprenyl-pyrophosphoryl-MurNAc-pentapeptide (lipid intermediate I) to form undecaprenyl-pyrophosphoryl-MurNAc-(pentapeptide)GlcNAc (lipid intermediate II). In Thiobacillus denitrificans (strain ATCC 25259 / T1), this protein is UDP-N-acetylglucosamine--N-acetylmuramyl-(pentapeptide) pyrophosphoryl-undecaprenol N-acetylglucosamine transferase.